A 223-amino-acid chain; its full sequence is Riboflavin kinase (223 aa).

The tract at residues 1–89 (MHRINALKHL…KHIFCGDEDK (89 aa)) is unknown. A riboflavin kinase region spans residues 90–223 (VELYGNVITG…IMIEDRSACE (134 aa)). Residue 99 to 104 (GLGEGQ) participates in CDP binding. The Mg(2+) site is built by Thr-128 and Asn-130. Positions 185 and 193 each coordinate FMN. 198–201 (VHLR) lines the CDP pocket.

Belongs to the archaeal riboflavin kinase family. It depends on Mg(2+) as a cofactor.

It carries out the reaction riboflavin + CTP = CDP + FMN + H(+). It participates in cofactor biosynthesis; FMN biosynthesis; FMN from riboflavin (CTP route): step 1/1. Its function is as follows. Catalyzes the CTP-dependent phosphorylation of riboflavin (vitamin B2) to form flavin mononucleotide (FMN). The polypeptide is Riboflavin kinase (ribK) (Methanococcoides burtonii (strain DSM 6242 / NBRC 107633 / OCM 468 / ACE-M)).